Reading from the N-terminus, the 123-residue chain is NADH-quinone oxidoreductase subunit A (123 aa).

The next 3 membrane-spanning stretches (helical) occupy residues 11 to 31 (YLPI…IMIL), 68 to 88 (LVAI…PWAI), and 93 to 113 (IGKM…IGFI).

This sequence belongs to the complex I subunit 3 family. NDH-1 is composed of 14 different subunits. Subunits NuoA, H, J, K, L, M, N constitute the membrane sector of the complex.

The protein resides in the cell inner membrane. It carries out the reaction a quinone + NADH + 5 H(+)(in) = a quinol + NAD(+) + 4 H(+)(out). In terms of biological role, NDH-1 shuttles electrons from NADH, via FMN and iron-sulfur (Fe-S) centers, to quinones in the respiratory chain. The immediate electron acceptor for the enzyme in this species is believed to be ubiquinone. Couples the redox reaction to proton translocation (for every two electrons transferred, four hydrogen ions are translocated across the cytoplasmic membrane), and thus conserves the redox energy in a proton gradient. The sequence is that of NADH-quinone oxidoreductase subunit A from Rickettsia prowazekii (strain Madrid E).